A 113-amino-acid polypeptide reads, in one-letter code: UPF0102 protein CHU_0465 (113 aa).

Belongs to the UPF0102 family.

This is UPF0102 protein CHU_0465 from Cytophaga hutchinsonii (strain ATCC 33406 / DSM 1761 / CIP 103989 / NBRC 15051 / NCIMB 9469 / D465).